Here is a 309-residue protein sequence, read N- to C-terminus: MSSTQFNKGPSYGLSAEVKNRLLSKYDPQKEAELRTWIEGLTGLSIGPDFQKGLKDGTILCTLMNKLQPGSVPKINRSMQNWHQLENLSNFIKAMVSYGMNPVDLFEANDLFESGNMTQVQVSLLALAGKAKTKGLQSGVDIGVKYSEKQERNFDDATMKAGQCVIGLQMGTNKCASQSGMTAYGTRRHLYDPKNHILPPMDHSTISLQMGTNKCASQVGMTAPGTRRHIYDTKLGTDKCDNSSMSLQMGYTQGANQSGQVFGLGRQIYDPKYCPQGTVADGAPSGTGDCPDPGEVPEYPPYYQEEAGY.

Ser2 carries the post-translational modification N-acetylserine. Lys8 and Lys25 each carry N6-acetyllysine. Residues 28–132 (PQKEAELRTW…SLLALAGKAK (105 aa)) enclose the Calponin-homology (CH) domain. A Phosphoserine modification is found at Ser138. Calponin-like repeat units lie at residues 166 to 191 (IGLQMGTNKCASQSGMTAYGTRRHLY), 206 to 231 (ISLQMGTNKCASQVGMTAPGTRRHIY), and 245 to 269 (MSLQMGYTQGANQSGQVFGLGRQIY). The disordered stretch occupies residues 283 to 309 (APSGTGDCPDPGEVPEYPPYYQEEAGY).

It belongs to the calponin family. In terms of tissue distribution, heart and smooth muscle.

In terms of biological role, thin filament-associated protein that is implicated in the regulation and modulation of smooth muscle contraction. It is capable of binding to actin, calmodulin and tropomyosin. The interaction of calponin with actin inhibits the actomyosin Mg-ATPase activity. The sequence is that of Calponin-2 (CNN2) from Homo sapiens (Human).